The sequence spans 343 residues: Glyceraldehyde-3-phosphate dehydrogenase 1 (343 aa).

Residues 13–14 (RI), Asp35, Arg79, and Ser121 contribute to the NAD(+) site. D-glyceraldehyde 3-phosphate is bound by residues 154–156 (SCT), Thr185, 214–215 (TG), and Arg237. Cys155 acts as the Nucleophile in catalysis. Position 319 (Asn319) interacts with NAD(+).

This sequence belongs to the glyceraldehyde-3-phosphate dehydrogenase family. In terms of assembly, homotetramer.

Its subcellular location is the cytoplasm. It catalyses the reaction D-glyceraldehyde 3-phosphate + phosphate + NAD(+) = (2R)-3-phospho-glyceroyl phosphate + NADH + H(+). Its pathway is carbohydrate degradation; glycolysis; pyruvate from D-glyceraldehyde 3-phosphate: step 1/5. Its function is as follows. Catalyzes the oxidative phosphorylation of glyceraldehyde 3-phosphate (G3P) to 1,3-bisphosphoglycerate (BPG) using the cofactor NAD. The first reaction step involves the formation of a hemiacetal intermediate between G3P and a cysteine residue, and this hemiacetal intermediate is then oxidized to a thioester, with concomitant reduction of NAD to NADH. The reduced NADH is then exchanged with the second NAD, and the thioester is attacked by a nucleophilic inorganic phosphate to produce BPG. The sequence is that of Glyceraldehyde-3-phosphate dehydrogenase 1 (gap1) from Trichormus variabilis (strain ATCC 29413 / PCC 7937) (Anabaena variabilis).